The sequence spans 252 residues: Probable NADP-dependent dehydrogenase HI_1430 (252 aa).

7–31 (LVTGATAGFGLAICKKLIEAGYKVI) lines the NADP(+) pocket. S137 lines the substrate pocket. Residue Y150 is the Proton acceptor of the active site.

This sequence belongs to the short-chain dehydrogenases/reductases (SDR) family.

This is Probable NADP-dependent dehydrogenase HI_1430 from Haemophilus influenzae (strain ATCC 51907 / DSM 11121 / KW20 / Rd).